A 543-amino-acid polypeptide reads, in one-letter code: Zinc finger protein tra-4 (543 aa).

The disordered stretch occupies residues 1–38 (MDDPNQCTIKQEDSITRPRPTEAPTIQNLKQEPAIEEG). A compositionally biased stretch (basic and acidic residues) spans 10-20 (KQEDSITRPRP). 7 C2H2-type zinc fingers span residues 218-241 (VRCK…RDKH), 327-350 (PQCP…AKKH), 381-406 (YVCF…KKFH), 413-436 (FRCS…KMSH), 442-464 (FQCH…ERMH), 470-493 (FECK…RDEH), and 495-518 (YVCA…YEEH).

The protein belongs to the krueppel C2H2-type zinc-finger protein family. As to quaternary structure, interacts with histone deacetylase hda-1. May interact with nasp-1.

The protein localises to the nucleus. In terms of biological role, probable transcription factor. Promotes normal hermaphrodite (XX) development, in concert with histone deacetylase hda-1 and nasp-1, perhaps as components of a complex. May cooperate with transcription factor tra-1 to repress male-specific genes in hermaphrodites. Synthetic multivulva (synMuv) class B protein, required to repress the induction of vulval development by let-60 Ras signaling. The polypeptide is Zinc finger protein tra-4 (Caenorhabditis elegans).